We begin with the raw amino-acid sequence, 547 residues long: CTP synthase (547 aa).

An amidoligase domain region spans residues 1 to 269 (MKTKFIFVTG…DQKVAIMLRL (269 aa)). Serine 14 lines the CTP pocket. Serine 14 provides a ligand contact to UTP. Residues 15 to 20 (SLGKGL) and aspartate 72 each bind ATP. Residues aspartate 72 and glutamate 143 each coordinate Mg(2+). CTP is bound by residues 150 to 152 (DIE), 190 to 195 (KTKPTQ), and lysine 226. UTP contacts are provided by residues 190–195 (KTKPTQ) and lysine 226. The region spanning 294-547 (TVAIVGKYVD…IGAAKKHAKV (254 aa)) is the Glutamine amidotransferase type-1 domain. Residue glycine 356 coordinates L-glutamine. Cysteine 383 functions as the Nucleophile; for glutamine hydrolysis in the catalytic mechanism. Residues 384-387 (LGMQ), glutamate 407, and arginine 475 contribute to the L-glutamine site. Residues histidine 520 and glutamate 522 contribute to the active site.

It belongs to the CTP synthase family. In terms of assembly, homotetramer.

It carries out the reaction UTP + L-glutamine + ATP + H2O = CTP + L-glutamate + ADP + phosphate + 2 H(+). The enzyme catalyses L-glutamine + H2O = L-glutamate + NH4(+). The catalysed reaction is UTP + NH4(+) + ATP = CTP + ADP + phosphate + 2 H(+). It participates in pyrimidine metabolism; CTP biosynthesis via de novo pathway; CTP from UDP: step 2/2. Allosterically activated by GTP, when glutamine is the substrate; GTP has no effect on the reaction when ammonia is the substrate. The allosteric effector GTP functions by stabilizing the protein conformation that binds the tetrahedral intermediate(s) formed during glutamine hydrolysis. Inhibited by the product CTP, via allosteric rather than competitive inhibition. In terms of biological role, catalyzes the ATP-dependent amination of UTP to CTP with either L-glutamine or ammonia as the source of nitrogen. Regulates intracellular CTP levels through interactions with the four ribonucleotide triphosphates. This is CTP synthase from Desulfovibrio desulfuricans (strain ATCC 27774 / DSM 6949 / MB).